A 560-amino-acid polypeptide reads, in one-letter code: Glucose-6-phosphate isomerase, cytosolic (560 aa).

N-acetylalanine is present on Ala-2. The active-site Proton donor is the Glu-361. Active-site residues include His-392 and Lys-517.

The protein belongs to the GPI family. In terms of assembly, homodimer.

The protein resides in the cytoplasm. It carries out the reaction alpha-D-glucose 6-phosphate = beta-D-fructose 6-phosphate. The protein operates within carbohydrate degradation; glycolysis; D-glyceraldehyde 3-phosphate and glycerone phosphate from D-glucose: step 2/4. The sequence is that of Glucose-6-phosphate isomerase, cytosolic (PGIC) from Arabidopsis lyrata subsp. petraea (Northern rock-cress).